Reading from the N-terminus, the 341-residue chain is Hydrogenase expression/formation protein HupE (341 aa).

This sequence belongs to the HypE family.

May be involved in the maturation of the NifE hydrogenase. The polypeptide is Hydrogenase expression/formation protein HupE (hupE) (Azotobacter chroococcum mcd 1).